Consider the following 520-residue polypeptide: Putative transporter svop-1 (520 aa).

Residues Met-1–Leu-85 are Cytoplasmic-facing. Residues Ser-86–Ile-106 traverse the membrane as a helical segment. Topologically, residues Ser-107 to Gln-120 are extracellular. The chain crosses the membrane as a helical span at residues Gln-121–Lys-141. Over Ile-142–Leu-157 the chain is Cytoplasmic. Residues Val-158–Phe-178 traverse the membrane as a helical segment. A topological domain (extracellular) is located at residue Arg-179. Residues Gly-180 to Leu-200 traverse the membrane as a helical segment. Topologically, residues Pro-201–Cys-208 are cytoplasmic. The helical transmembrane segment at Val-209 to Phe-229 threads the bilayer. The Extracellular segment spans residues Val-230–Arg-237. Residues Ala-238 to Pro-258 form a helical membrane-spanning segment. Over Glu-259–Thr-319 the chain is Cytoplasmic. The chain crosses the membrane as a helical span at residues Ile-320 to Thr-340. Over Thr-341–Tyr-372 the chain is Extracellular. The chain crosses the membrane as a helical span at residues Phe-373–Ile-393. Over Glu-394–Ala-410 the chain is Cytoplasmic. Residues Ile-411–Val-431 traverse the membrane as a helical segment. Topologically, residues Ala-432–Ala-434 are extracellular. Residues Phe-435–Leu-455 form a helical membrane-spanning segment. Residues Arg-456 to Gly-461 lie on the Cytoplasmic side of the membrane. A helical membrane pass occupies residues Thr-462–Ser-487. At Leu-488 to Pro-489 the chain is on the extracellular side. The chain crosses the membrane as a helical span at residues Ile-490–Ile-509. The Cytoplasmic portion of the chain corresponds to Glu-510 to His-520.

This sequence belongs to the major facilitator superfamily.

It localises to the membrane. The sequence is that of Putative transporter svop-1 from Caenorhabditis elegans.